Here is a 505-residue protein sequence, read N- to C-terminus: AMP phosphorylase (505 aa).

AMP-binding positions include G170, 196 to 201 (SRAITS), and T205. The active-site Proton donor is the D258. S266 and K290 together coordinate AMP.

The protein belongs to the thymidine/pyrimidine-nucleoside phosphorylase family. Type 2 subfamily.

The enzyme catalyses AMP + phosphate = alpha-D-ribose 1,5-bisphosphate + adenine. The catalysed reaction is CMP + phosphate = cytosine + alpha-D-ribose 1,5-bisphosphate. It catalyses the reaction UMP + phosphate = alpha-D-ribose 1,5-bisphosphate + uracil. Functionally, catalyzes the conversion of AMP and phosphate to adenine and ribose 1,5-bisphosphate (R15P). Exhibits phosphorylase activity toward CMP and UMP in addition to AMP. Functions in an archaeal AMP degradation pathway, together with R15P isomerase and RubisCO. The protein is AMP phosphorylase of Methanococcus vannielii (strain ATCC 35089 / DSM 1224 / JCM 13029 / OCM 148 / SB).